The chain runs to 253 residues: Hydroxyacylglutathione hydrolase (253 aa).

The Zn(2+) site is built by histidine 54, histidine 56, aspartate 58, histidine 59, histidine 110, aspartate 127, and histidine 165.

This sequence belongs to the metallo-beta-lactamase superfamily. Glyoxalase II family. In terms of assembly, monomer. It depends on Zn(2+) as a cofactor.

It catalyses the reaction an S-(2-hydroxyacyl)glutathione + H2O = a 2-hydroxy carboxylate + glutathione + H(+). It functions in the pathway secondary metabolite metabolism; methylglyoxal degradation; (R)-lactate from methylglyoxal: step 2/2. Functionally, thiolesterase that catalyzes the hydrolysis of S-D-lactoyl-glutathione to form glutathione and D-lactic acid. The chain is Hydroxyacylglutathione hydrolase from Idiomarina loihiensis (strain ATCC BAA-735 / DSM 15497 / L2-TR).